The primary structure comprises 132 residues: MRHRHGLRKLNRTSSHRLAMLRNMSNSLLQHELIKTTVPKAKELRKVVEPLITLAKKDTVANRRLAFARLRDRDMVTKLFNELGPRFATRPGGYTRILKFGFRQGDNAPMALVELLDRPEVAEAVEVDGAAE.

It belongs to the bacterial ribosomal protein bL17 family. Part of the 50S ribosomal subunit. Contacts protein L32.

The sequence is that of Large ribosomal subunit protein bL17 from Ralstonia pickettii (strain 12J).